The primary structure comprises 184 residues: Elongation factor P (184 aa).

It belongs to the elongation factor P family.

The protein resides in the cytoplasm. It functions in the pathway protein biosynthesis; polypeptide chain elongation. Its function is as follows. Involved in peptide bond synthesis. Stimulates efficient translation and peptide-bond synthesis on native or reconstituted 70S ribosomes in vitro. Probably functions indirectly by altering the affinity of the ribosome for aminoacyl-tRNA, thus increasing their reactivity as acceptors for peptidyl transferase. The polypeptide is Elongation factor P (Polaromonas naphthalenivorans (strain CJ2)).